We begin with the raw amino-acid sequence, 856 residues long: Valine--tRNA ligase (856 aa).

Positions 47–57 (PTASGVLHIGH) match the 'HIGH' region motif. The short motif at 578 to 582 (KMSKS) is the 'KMSKS' region element. K581 lines the ATP pocket.

The protein belongs to the class-I aminoacyl-tRNA synthetase family. ValS type 2 subfamily. Monomer.

The protein resides in the cytoplasm. The enzyme catalyses tRNA(Val) + L-valine + ATP = L-valyl-tRNA(Val) + AMP + diphosphate. Functionally, catalyzes the attachment of valine to tRNA(Val). As ValRS can inadvertently accommodate and process structurally similar amino acids such as threonine, to avoid such errors, it has a 'posttransfer' editing activity that hydrolyzes mischarged Thr-tRNA(Val) in a tRNA-dependent manner. This Tropheryma whipplei (strain Twist) (Whipple's bacillus) protein is Valine--tRNA ligase.